The sequence spans 259 residues: Bisphosphoglycerate mutase (259 aa).

Residue Ser2 is modified to N-acetylserine. Residues Arg10 to Asn17, Cys23 to Ser24, Arg62, Glu89 to Tyr92, Arg100, and Arg116 to Arg117 each bind substrate. The Tele-phosphohistidine intermediate role is filled by His11. The active-site Proton donor/acceptor is Glu89. Position 122 is a phosphothreonine (Thr122). Gly189 to Asn190 is a substrate binding site.

The protein belongs to the phosphoglycerate mutase family. BPG-dependent PGAM subfamily. Homodimer. In terms of tissue distribution, expressed in red blood cells. Expressed in placenta (labyrinthine trophoblasts).

It catalyses the reaction (2R)-3-phospho-glyceroyl phosphate = (2R)-2,3-bisphosphoglycerate + H(+). It carries out the reaction (2R)-2-phosphoglycerate = (2R)-3-phosphoglycerate. Its activity is regulated as follows. At alkaline pH BPGM favors the synthase reaction; however, at lower pH the phosphatase reaction is dominant. Inhibited by citrate. Its function is as follows. Plays a major role in regulating hemoglobin oxygen affinity by controlling the levels of its allosteric effector 2,3-bisphosphoglycerate (2,3-BPG). Also exhibits mutase (EC 5.4.2.11) activity. This chain is Bisphosphoglycerate mutase (Bpgm), found in Mus musculus (Mouse).